Reading from the N-terminus, the 90-residue chain is Small ribosomal subunit protein bS20 (90 aa).

The protein belongs to the bacterial ribosomal protein bS20 family.

Binds directly to 16S ribosomal RNA. This chain is Small ribosomal subunit protein bS20, found in Nautilia profundicola (strain ATCC BAA-1463 / DSM 18972 / AmH).